The chain runs to 287 residues: Survival motor neuron protein (287 aa).

The tract at residues 1-27 (MGGGGGLPEPEDSVLFRRGTGQSDDSD) is disordered. The P1 (binding site for GEMIN2) stretch occupies residues 8–39 (PEPEDSVLFRRGTGQSDDSDIWDDTALIKAYD). At threonine 20 the chain carries Phosphothreonine. Serine 23 and serine 26 each carry phosphoserine. Lysine 46 is covalently cross-linked (Glycyl lysine isopeptide (Lys-Gly) (interchain with G-Cter in SUMO2)). The tract at residues 52–83 (GDISEASDKPKSTPKRKPAKKNKSQKKNATTA) is disordered. The segment covering 63–77 (STPKRKPAKKNKSQK) has biased composition (basic residues). Residue threonine 64 is modified to Phosphothreonine. Positions 86-146 (QWKVGDKCSA…LSPACEVANN (61 aa)) constitute a Tudor domain. Residues 92-205 (KCSAVWSEDG…MSGSGLGPGK (114 aa)) are required for interaction with RPP20/POP7. The segment at 148–216 (EQDTQENENE…GVKFSGPPPP (69 aa)) is disordered. Residues 157–180 (ESQISTDESENSSRSPGNKPNNIK) are compositionally biased toward polar residues. Lysine 205 participates in a covalent cross-link: Glycyl lysine isopeptide (Lys-Gly) (interchain with G-Cter in SUMO2). The segment at 234–261 (PPIIPPPPPICPDSLDDADALGSMLISW) is P2 (binding site for SM B). The segment at 273–287 (GFKQNQKEGRCSHFN) is required for interaction with SYNCRIP.

It belongs to the SMN family. As to quaternary structure, homooligomer; may form higher order homooligomers in the dimer to octamer range. Part of the core SMN complex that contains SMN1, GEMIN2/SIP1, DDX20/GEMIN3, GEMIN4, GEMIN5, GEMIN6, GEMIN7, GEMIN8 and STRAP/UNRIP. Part of the SMN-Sm complex that contains SMN1, GEMIN2/SIP1, DDX20/GEMIN3, GEMIN4, GEMIN5, GEMIN6, GEMIN7, GEMIN8, STRAP/UNRIP and the Sm proteins SNRPB, SNRPD1, SNRPD2, SNRPD3, SNRPE, SNRPF and SNRPG. Component of an import snRNP complex composed of KPNB1, RNUT1, SMN1 and ZNF259. Interacts with DDX20, FBL, NOLA1, RNUT1, SYNCRIP and with several spliceosomal snRNP core Sm proteins, including SNRPB, SNRPD1, SNRPD2, SNRPD3, SNRPE and ILF3. Interacts with GEMIN2; the interaction is direct. Interacts with GEMIN3; the interaction is direct. Interacts with GEMIN8; the interaction is direct. Interacts with SNRPB; the interaction is direct. Interacts (via Tudor domain) with SNRPD1 (via C-terminus); the interaction is direct. Interacts with SNRPD2; the interaction is direct. Interacts (via Tudor domain) with SNRPD3 (via C-terminus); the interaction is direct. Interacts with SNRPE; the interaction is direct. Interacts with OSTF1, LSM10, LSM11 and RPP20/POP7. Interacts (via C-terminal region) with ZPR1 (via C-terminal region). Interacts (via Tudor domain) with COIL. Interacts with SETX; recruits SETX to POLR2A. Interacts with POLR2A (via the C-terminal domain (CTD)). Interacts with PRMT5. Interacts with XRN2. Interacts (via C-terminus) with FMR1 (via C-terminus); the interaction is direct and occurs in a RNA-independent manner. Interacts (via Tudor domain) with SF3B2 ('Arg-508'-methylated form). Interacts with WRAP53/TCAB1. Interacts (via Tudor domain) with ELAVL4 in an RNA-independent manner; the interaction is required for localization of ELAVL4 to RNA granules. Interacts with FRG1.

Its subcellular location is the nucleus. The protein localises to the gem. The protein resides in the cajal body. It localises to the cytoplasm. It is found in the cytoplasmic granule. Its subcellular location is the perikaryon. The protein localises to the cell projection. The protein resides in the neuron projection. It localises to the axon. It is found in the myofibril. Its subcellular location is the sarcomere. The protein localises to the z line. Functionally, the SMN complex catalyzes the assembly of small nuclear ribonucleoproteins (snRNPs), the building blocks of the spliceosome, and thereby plays an important role in the splicing of cellular pre-mRNAs. Most spliceosomal snRNPs contain a common set of Sm proteins SNRPB, SNRPD1, SNRPD2, SNRPD3, SNRPE, SNRPF and SNRPG that assemble in a heptameric protein ring on the Sm site of the small nuclear RNA to form the core snRNP (Sm core). In the cytosol, the Sm proteins SNRPD1, SNRPD2, SNRPE, SNRPF and SNRPG are trapped in an inactive 6S pICln-Sm complex by the chaperone CLNS1A that controls the assembly of the core snRNP. To assemble core snRNPs, the SMN complex accepts the trapped 5Sm proteins from CLNS1A forming an intermediate. Binding of snRNA inside 5Sm ultimately triggers eviction of the SMN complex, thereby allowing binding of SNRPD3 and SNRPB to complete assembly of the core snRNP. Within the SMN complex, SMN1 acts as a structural backbone and together with GEMIN2 it gathers the Sm complex subunits. Ensures the correct splicing of U12 intron-containing genes that may be important for normal motor and proprioceptive neurons development. Also required for resolving RNA-DNA hybrids created by RNA polymerase II, that form R-loop in transcription terminal regions, an important step in proper transcription termination. May also play a role in the metabolism of small nucleolar ribonucleoprotein (snoRNPs). This Canis lupus familiaris (Dog) protein is Survival motor neuron protein (SMN1).